Here is a 104-residue protein sequence, read N- to C-terminus: UPF0213 protein plu4503 (104 aa).

In terms of domain architecture, GIY-YIG spans 4-79 (NQWVLYLLKT…KQLSKQQKER (76 aa)).

It belongs to the UPF0213 family.

The sequence is that of UPF0213 protein plu4503 from Photorhabdus laumondii subsp. laumondii (strain DSM 15139 / CIP 105565 / TT01) (Photorhabdus luminescens subsp. laumondii).